The following is a 378-amino-acid chain: Homeobox protein Meis3 (378 aa).

A disordered region spans residues 24-57 (FSEAAPSVPRAPGPYTPHRPPQLQAPGLDSDSLK). Over residues 32–43 (PRAPGPYTPHRP) the composition is skewed to pro residues. The region spanning 99–182 (GGDVCSSDSF…PIDLVIEDRD (84 aa)) is the MEIS N-terminal domain. Residues 203 to 265 (NTTWIRDHED…DEDLDLERRR (63 aa)) form a disordered region. The segment covering 230–244 (SQSGDNSSDQGDGLD) has biased composition (low complexity). The segment at residues 265–327 (RNKKRGIFPK…NARRRIVQPM (63 aa)) is a DNA-binding region (homeobox; TALE-type).

The protein belongs to the TALE/MEIS homeobox family. As to expression, expressed at high levels in the brain. Significant expression also observed in the heart, spleen and lung. Expressed in pancreatic islets (beta-cells and non-beta-cells).

Its subcellular location is the nucleus. Its function is as follows. Transcriptional regulator which directly modulates PDPK1 expression, thus promoting survival of pancreatic beta-cells. Also regulates expression of NDFIP1, BNIP3, and CCNG1. The chain is Homeobox protein Meis3 (Meis3) from Mus musculus (Mouse).